The sequence spans 125 residues: Oxytocin-neurophysin 1 (125 aa).

The first 19 residues, 1-19 (MAGSSLACCLLGLLALTSA), serve as a signal peptide directing secretion. Cysteines 20 and 25 form a disulfide. Glycine amide is present on Gly-28. Intrachain disulfides connect Cys-41-Cys-85, Cys-44-Cys-58, Cys-52-Cys-75, Cys-59-Cys-65, Cys-92-Cys-104, Cys-98-Cys-116, and Cys-105-Cys-110.

Belongs to the vasopressin/oxytocin family. Interacts with oxytocin receptor (Ki=1.5 nM). Interacts with vasopressin V1aR/AVPR1A (Ki=37 nM), V1bR/AVPR1B (Ki=222 nM), and V2R/AVPR2 receptors (Ki=823 nM).

It is found in the secreted. Its function is as follows. Neurophysin 1 specifically binds oxytocin. Functionally, oxytocin causes contraction of the smooth muscle of the uterus and of the mammary gland. Acts by binding to oxytocin receptor (OXTR). The polypeptide is Oxytocin-neurophysin 1 (OXT) (Bos taurus (Bovine)).